Reading from the N-terminus, the 560-residue chain is Hypermethylated in cancer 2 protein (560 aa).

Residues 24-87 form the BTB domain; the sequence is CDVIIVVENA…IYTGKLLSSD (64 aa). Disordered stretches follow at residues 122 to 163 and 183 to 367; these read RSLL…KTKR and HCTT…GGRN. Polar residues-rich tracts occupy residues 126–153 and 183–203; these read NKPTTPTNGRTSRNQRLSSTPVTPNQMS and HCTTSNSLSPSTSKNGSNGSC. Positions 224-242 are enriched in low complexity; the sequence is EEVSPSSIPQESPQSASES. Residues 243–259 are compositionally biased toward polar residues; the sequence is TANSASFDENPNTQNLT. The segment covering 296-308 has biased composition (basic and acidic residues); sequence PKSEGKKGEDMER. Low complexity predominate over residues 348-362; it reads ENGQEQSEESGQSEN. 5 C2H2-type zinc fingers span residues 387-409, 450-472, 478-500, 506-528, and 534-556; these read YVCIPCGKGFPSSEELNAHVETH, FSCSVCNKSYKDPATLRQHEKTH, FPCNICGKMFTQRGTMTRHMRSH, FACEECGMRFTRQYRLTEHMRVH, and YECQLCGGKFTQQRNLISHLRMH.

This sequence belongs to the krueppel C2H2-type zinc-finger protein family. Hic subfamily.

Its subcellular location is the nucleus. Transcriptional repressor. This is Hypermethylated in cancer 2 protein (hic2) from Danio rerio (Zebrafish).